A 200-amino-acid chain; its full sequence is NADH-quinone oxidoreductase subunit C (200 aa).

It belongs to the complex I 30 kDa subunit family. NDH-1 is composed of 14 different subunits. Subunits NuoB, C, D, E, F, and G constitute the peripheral sector of the complex.

It localises to the cell inner membrane. The enzyme catalyses a quinone + NADH + 5 H(+)(in) = a quinol + NAD(+) + 4 H(+)(out). NDH-1 shuttles electrons from NADH, via FMN and iron-sulfur (Fe-S) centers, to quinones in the respiratory chain. The immediate electron acceptor for the enzyme in this species is believed to be ubiquinone. Couples the redox reaction to proton translocation (for every two electrons transferred, four hydrogen ions are translocated across the cytoplasmic membrane), and thus conserves the redox energy in a proton gradient. The polypeptide is NADH-quinone oxidoreductase subunit C (Burkholderia mallei (strain NCTC 10247)).